We begin with the raw amino-acid sequence, 351 residues long: Nicotinate-nucleotide--dimethylbenzimidazole phosphoribosyltransferase (351 aa).

Glutamate 317 serves as the catalytic Proton acceptor.

Belongs to the CobT family.

The catalysed reaction is 5,6-dimethylbenzimidazole + nicotinate beta-D-ribonucleotide = alpha-ribazole 5'-phosphate + nicotinate + H(+). It functions in the pathway nucleoside biosynthesis; alpha-ribazole biosynthesis; alpha-ribazole from 5,6-dimethylbenzimidazole: step 1/2. In terms of biological role, catalyzes the synthesis of alpha-ribazole-5'-phosphate from nicotinate mononucleotide (NAMN) and 5,6-dimethylbenzimidazole (DMB). In Pseudomonas putida (strain ATCC 47054 / DSM 6125 / CFBP 8728 / NCIMB 11950 / KT2440), this protein is Nicotinate-nucleotide--dimethylbenzimidazole phosphoribosyltransferase.